Reading from the N-terminus, the 508-residue chain is Ribonuclease Y (508 aa).

The KH domain maps to 198–264; it reads TVSVINLPND…RLTIEKLITD (67 aa). The region spanning 324–417 is the HD domain; it reads VLTHSIEVAK…VQAADAVSAS (94 aa).

It belongs to the RNase Y family.

Functionally, endoribonuclease that initiates mRNA decay. The chain is Ribonuclease Y from Fusobacterium nucleatum subsp. nucleatum (strain ATCC 25586 / DSM 15643 / BCRC 10681 / CIP 101130 / JCM 8532 / KCTC 2640 / LMG 13131 / VPI 4355).